The primary structure comprises 392 residues: F-box protein At5g65850 (392 aa).

One can recognise an F-box domain in the interval 29-78; that stretch reads TEKSVQIPVDIIIEILLRLPAKSIATCRCVSKLWISVICRQDFTELFLTR.

This Arabidopsis thaliana (Mouse-ear cress) protein is F-box protein At5g65850.